Reading from the N-terminus, the 450-residue chain is Probable glycosidase CRR1 (450 aa).

A signal peptide spans 1-17 (MSKRIIQLILLSAFARA). The GH16 domain occupies 67-347 (SPESCVPVPA…WENAPDIKAH (281 aa)). Catalysis depends on glutamate 225, which acts as the Nucleophile. Glutamate 229 serves as the catalytic Proton donor. Positions 428-450 (AQRQQHHRRSLPHVEAPPITNTM) are disordered.

It belongs to the glycosyl hydrolase 16 family. CRR1 subfamily.

It localises to the spore wall. In terms of biological role, spore specific glycosidase involved in spore wall assembly during sporulation. May be involved in copper import. In Eremothecium gossypii (strain ATCC 10895 / CBS 109.51 / FGSC 9923 / NRRL Y-1056) (Yeast), this protein is Probable glycosidase CRR1 (CRR1).